Reading from the N-terminus, the 237-residue chain is 1-(5-phosphoribosyl)-5-[(5-phosphoribosylamino)methylideneamino] imidazole-4-carboxamide isomerase (237 aa).

D8 (proton acceptor) is an active-site residue. Catalysis depends on D129, which acts as the Proton donor.

This sequence belongs to the HisA/HisF family.

The protein resides in the cytoplasm. It catalyses the reaction 1-(5-phospho-beta-D-ribosyl)-5-[(5-phospho-beta-D-ribosylamino)methylideneamino]imidazole-4-carboxamide = 5-[(5-phospho-1-deoxy-D-ribulos-1-ylimino)methylamino]-1-(5-phospho-beta-D-ribosyl)imidazole-4-carboxamide. It participates in amino-acid biosynthesis; L-histidine biosynthesis; L-histidine from 5-phospho-alpha-D-ribose 1-diphosphate: step 4/9. The polypeptide is 1-(5-phosphoribosyl)-5-[(5-phosphoribosylamino)methylideneamino] imidazole-4-carboxamide isomerase (Dehalococcoides mccartyi (strain ATCC BAA-2266 / KCTC 15142 / 195) (Dehalococcoides ethenogenes (strain 195))).